A 490-amino-acid chain; its full sequence is 5'-3' exonuclease PLD3 (490 aa).

The Cytoplasmic portion of the chain corresponds to 1-38 (MKPKLMYQELKVPAEEPASELPMNEIEAWKAAEKKARW). Residues 39 to 59 (VLLVLILAVVGFGALMTQLFL) form a helical; Signal-anchor for type II membrane protein membrane-spanning segment. At 60–490 (WEYGDLHLFG…DSVGNACRLL (431 aa)) the chain is on the lumenal side. 2 disulfides stabilise this stretch: cysteine 77–cysteine 239 and cysteine 81–cysteine 237. N-linked (GlcNAc...) asparagine glycans are attached at residues asparagine 97 and asparagine 132. Residues 196–223 (THGVLHTKFWVVDQTHFYLGSANMDWRS) enclose the PLD phosphodiesterase 1 domain. Catalysis depends on residues histidine 201, lysine 203, and aspartate 208. Histidine 201 serves as the catalytic Proton donor. Residues histidine 201 and lysine 203 each coordinate phosphate. Phosphate is bound at residue asparagine 218. N-linked (GlcNAc...) asparagine glycosylation is found at asparagine 236, asparagine 284, and asparagine 387. An intrachain disulfide couples cysteine 366 to cysteine 487. The 27-residue stretch at 411–437 (YARVNHNKYMVTERATYIGTSNWSGSY) folds into the PLD phosphodiesterase 2 domain. Histidine 416 provides a ligand contact to phosphate. Histidine 416 acts as the Nucleophile in catalysis. Residue phenylalanine 438 participates in Mg(2+) binding.

Belongs to the phospholipase D family. Homodimer. Interacts with APP. In terms of processing, N-glycosylated. Proteolytically processed to a soluble form that is stable within endosomes and lysosomes. During transport through the secretory pathway becomes proteolysed by cysteine proteases, thereby releasing a stable soluble lysosomal lumenal polypeptide, whereas the transmembrane-bound fragment is rapidly degraded. Its transport route to lysosomes involves ubiquitination and the ESCRT complex. Post-translationally, ubiquitinated. Ubiquitination mediates sorting into lysosomes.

It localises to the endoplasmic reticulum membrane. Its subcellular location is the lysosome lumen. The protein resides in the early endosome membrane. The protein localises to the late endosome membrane. It is found in the golgi apparatus membrane. It localises to the endosome membrane. It catalyses the reaction Exonucleolytic cleavage in the 5'- to 3'-direction to yield nucleoside 3'-phosphates.. The enzyme catalyses a 5'-end 5'-dephospho-ribonucleotidyl-ribonucleotide-RNA + H2O = a ribonucleoside 3'-phosphate + a 5'-end dephospho-ribonucleoside-RNA + H(+). The catalysed reaction is a ribonucleoside 3'-phosphate-2'-3'-cyclophospho-GMP + H2O = a ribonucleoside 3'-phosphate + 2',3'-cyclophospho-GMP + H(+). It carries out the reaction a 5'-end 5'-dephospho-2'-deoxyribonucleotidyl-2'-deoxyribonucleotide in single-stranded DNA + H2O = a 5'-end dephospho-2'-deoxyribonucleoside in single-stranded DNA + a 2'-deoxyribonucleoside 3'-phosphate + H(+). It catalyses the reaction a 5'-end 5'-phospho-2'-deoxyribonucleotide in single-stranded DNA + H2O = a 5'-end 5'-dephospho-2'-deoxyribonucleotide in single-stranded DNA + phosphate. The enzyme catalyses a 3-lyso-sn-glycero-1-phospho-(3'-acyl-1'-sn-glycerol) + a 1-acyl-sn-glycerol = a 3-acyl-sn-glycero-1-phospho-(3'-acyl-1'-sn-glycerol) + glycerol. The catalysed reaction is 3-lyso-sn-glycero-1-phospho-(3'-(9Z-octadecenoyl)-1'-sn-glycerol) + 1-(9Z-octadecenoyl)-sn-glycerol = 3-(9Z-octadecenoyl)-sn-glycero-1-phospho-(3'-(9Z-octadecenoyl)-1'-sn-glycerol) + glycerol. In terms of biological role, 5'-&gt;3' exonuclease that hydrolyzes the phosphodiester bond of single-stranded DNA (ssDNA) and RNA molecules to form nucleoside 3'-monophosphates and 5'-end 5'-hydroxy deoxyribonucleotide/ribonucleotide fragments. Partially redundant with PLD4, can cleave all four nucleotides displaying higher efficiency for ssDNA and RNA fragments initiated with uridine and guanosine residues and lower efficiency for cytidine-initiated substrates. As a result, it does not always degrade polynucleotides to the single nucleotide level, it can stall at specific sites sparing certain fragments from exonucleolytic degradation. Processes self and pathogenic ssDNA and RNA molecules that reach the endolysosomal compartment via phagocytosis or autophagy and may serve as 'danger' signals for recognition by innate immune receptors such as toll-like receptors (TLRs). Degrades mitochondrial CpG-rich ssDNA fragments to prevent TLR9 activation and autoinflammatory response, but it can cleave viral RNA to generate ligands for TLR7 activation and initiate antiviral immune responses. In plasmacytoid dendritic cells, it cooperates with endonuclease RNASET2 to release 2',3'-cyclic guanosine monophosphate (2',3'-cGMP), a potent stimulatory ligand for TLR7. Produces 2',3'-cGMPs and cytidine-rich RNA fragments that occupy TLR7 ligand-binding pockets and trigger a signaling-competent state. Can exert polynucleotide phosphatase activity toward 5'-phosphorylated ssDNA substrates although at a slow rate. Transphosphatidylase that catalyzes the exchange with R to S stereo-inversion of the glycerol moiety between (S,R)-lysophosphatidylglycerol (LPG) and monoacylglycerol (MAG) substrates to yield (S,S)-bis(monoacylglycero)phosphate (BMP). Can synthesize a variety of (S,S)-BMPs representing the main phospholipid constituent of lysosomal intralumenal vesicle (ILV) membranes that bind acid hydrolases for lipid degradation. Regulates the homeostasis and interorganellar communication of the endolysosomal system with an overall impact on cellular removal of dysfunctional organelles via autophagy as well as proper protein and lipid turnover. May play a role in myotube formation in response to ER stress. The sequence is that of 5'-3' exonuclease PLD3 (PLD3) from Bos taurus (Bovine).